A 1026-amino-acid polypeptide reads, in one-letter code: Vacuolar protein sorting-associated protein 18 homolog (1026 aa).

The stretch at 858-896 forms a coiled coil; it reads IVDFLKRNKQRLEKLERSMKEATEIASEIRDKQEKLKNR. The RING-type; degenerate zinc-finger motif lies at 906–932; sequence CSHCARPISGRAFNVHSCRHFFHRECL.

Probable core component of at least two putative endosomal tethering complexes, the homotypic fusion and vacuole protein sorting (HOPS) complex and the class C core vacuole/endosome tethering (CORVET) complex. Their common core is composed of the class C Vps proteins vps-11, vps-16 and vps-18, which in HOPS further associates with vps-33.1, vps-39 and vps-41 and in CORVET with vps-8 and vps-33.2. In hermaphrodites, expressed in coelomocytes and gonadal sheath cells.

Its subcellular location is the cytoplasm. It is found in the late endosome membrane. It localises to the lysosome membrane. The protein resides in the early endosome. The protein localises to the cytoplasmic vesicle. Its subcellular location is the autophagosome. It is found in the clathrin-coated vesicle. Functionally, plays a role in vesicle-mediated protein trafficking to lysosomal compartments including the endocytic membrane transport and autophagic pathways. Believed to act as a core component of the putative HOPS and CORVET endosomal tethering complexes which are proposed to be involved in the rab-5-to-rab-7 endosome conversion probably implicating sand-1, and via binding SNAREs and SNARE complexes to mediate tethering and docking events during SNARE-mediated membrane fusion. The HOPS complex is proposed to be recruited to rab-7 on the late endosomal membrane and to regulate late endocytic, phagocytic and autophagic traffic towards lysosomes. Within the HOPS complex, contributes to the normal development of gut granules in intestinal cells of the embryo, and also promotes the trafficking of embryonic intestinal gut granules away from lysosomes. The CORVET complex is proposed to function as a rab-5 effector to mediate early endosome fusion probably in specific endosome subpopulations. Required for fusion of endosomes and autophagosomes with lysosomes. Plays a role in the degradation of apoptotic cells during programmed cell death. This Caenorhabditis elegans protein is Vacuolar protein sorting-associated protein 18 homolog.